The primary structure comprises 525 residues: Glutamyl-tRNA(Gln) amidotransferase subunit A, mitochondrial (525 aa).

Active-site charge relay system residues include Lys76 and Ser168. The active-site Acyl-ester intermediate is Ser192.

This sequence belongs to the amidase family. GatA subfamily. As to quaternary structure, subunit of the heterotrimeric GatCAB amidotransferase (AdT) complex, composed of A (QRSL1), B (GATB) and C (GATC) subunits.

It is found in the mitochondrion. The catalysed reaction is L-glutamyl-tRNA(Gln) + L-glutamine + ATP + H2O = L-glutaminyl-tRNA(Gln) + L-glutamate + ADP + phosphate + H(+). Allows the formation of correctly charged Gln-tRNA(Gln) through the transamidation of misacylated Glu-tRNA(Gln) in the mitochondria. The reaction takes place in the presence of glutamine and ATP through an activated gamma-phospho-Glu-tRNA(Gln). The chain is Glutamyl-tRNA(Gln) amidotransferase subunit A, mitochondrial (Qrsl1) from Mus musculus (Mouse).